The following is a 226-amino-acid chain: MNENLFASFIAPTMMGLPIVTLIIMFPSLLFPTPKRLINNRTISIQQWLIQLTSKQMMAIHNQKGQTWSLMLMSLIMFIGSTNILGLLPHSFTPTTQLSMNLGMAIPLWSATVFTGFRYKTKTSLAHFLPQGTPALLIPMLVIIETISLFIQPVALAVRLTANITAGHLLIHLIGGATLALLNINTMTAFITFTILILLTILEFAVALIQAYVFTLLVSLYLHDNT.

The next 6 helical transmembrane spans lie at 6–26 (FASF…IIMF), 68–88 (WSLM…LGLL), 97–117 (QLSM…FTGF), 136–156 (LLIP…PVAL), 164–184 (ITAG…LLNI), and 189–209 (AFIT…VALI).

Belongs to the ATPase A chain family. In terms of assembly, component of the ATP synthase complex composed at least of ATP5F1A/subunit alpha, ATP5F1B/subunit beta, ATP5MC1/subunit c (homooctomer), MT-ATP6/subunit a, MT-ATP8/subunit 8, ATP5ME/subunit e, ATP5MF/subunit f, ATP5MG/subunit g, ATP5MK/subunit k, ATP5MJ/subunit j, ATP5F1C/subunit gamma, ATP5F1D/subunit delta, ATP5F1E/subunit epsilon, ATP5PF/subunit F6, ATP5PB/subunit b, ATP5PD/subunit d, ATP5PO/subunit OSCP. ATP synthase complex consists of a soluble F(1) head domain (subunits alpha(3) and beta(3)) - the catalytic core - and a membrane F(0) domain - the membrane proton channel (subunits c, a, 8, e, f, g, k and j). These two domains are linked by a central stalk (subunits gamma, delta, and epsilon) rotating inside the F1 region and a stationary peripheral stalk (subunits F6, b, d, and OSCP). Interacts with DNAJC30; interaction is direct.

It is found in the mitochondrion inner membrane. It catalyses the reaction H(+)(in) = H(+)(out). Subunit a, of the mitochondrial membrane ATP synthase complex (F(1)F(0) ATP synthase or Complex V) that produces ATP from ADP in the presence of a proton gradient across the membrane which is generated by electron transport complexes of the respiratory chain. ATP synthase complex consist of a soluble F(1) head domain - the catalytic core - and a membrane F(1) domain - the membrane proton channel. These two domains are linked by a central stalk rotating inside the F(1) region and a stationary peripheral stalk. During catalysis, ATP synthesis in the catalytic domain of F(1) is coupled via a rotary mechanism of the central stalk subunits to proton translocation. With the subunit c (ATP5MC1), forms the proton-conducting channel in the F(0) domain, that contains two crucial half-channels (inlet and outlet) that facilitate proton movement from the mitochondrial intermembrane space (IMS) into the matrix. Protons are taken up via the inlet half-channel and released through the outlet half-channel, following a Grotthuss mechanism. This is ATP synthase F(0) complex subunit a from Sus scrofa (Pig).